A 62-amino-acid chain; its full sequence is Beta-defensin 33 (62 aa).

Residues 1 to 20 form the signal peptide; the sequence is MRLLFLLFILLVCLAQTTSG. 3 disulfides stabilise this stretch: Cys30-Cys59, Cys37-Cys52, and Cys45-Cys60.

It belongs to the beta-defensin family.

Its subcellular location is the secreted. In terms of biological role, has antibacterial activity. In Mus musculus (Mouse), this protein is Beta-defensin 33 (Defb33).